The chain runs to 90 residues: Conotoxin Rg9.1 (90 aa).

Residues 1–20 form the signal peptide; sequence MHLSLARSAVLILLLLFALG. Residues 21-60 constitute a propeptide that is removed on maturation; it reads NFVGVQPGQITRDADHGINLRSLRKQMSRSPLVKGAFCGQ. Cystine bridges form between Cys58–Cys71, Cys62–Cys73, and Cys67–Cys80.

It belongs to the conotoxin P superfamily. As to expression, expressed by the venom duct.

The protein localises to the secreted. Its function is as follows. Probable neurotoxin that inhibits ion channels. This Conus regius (Crown cone) protein is Conotoxin Rg9.1.